Here is a 556-residue protein sequence, read N- to C-terminus: CTP synthase (556 aa).

An amidoligase domain region spans residues M1–L266. A CTP-binding site is contributed by S12. S12 provides a ligand contact to UTP. Residue S13 to V18 participates in ATP binding. Position 53 (Y53) interacts with L-glutamine. D70 lines the ATP pocket. Mg(2+)-binding residues include D70 and E140. CTP is bound by residues D147–E149, K187–Q192, and K223. UTP-binding positions include K187 to Q192 and K223. In terms of domain architecture, Glutamine amidotransferase type-1 spans T291–S544. G356 contacts L-glutamine. C383 (nucleophile; for glutamine hydrolysis) is an active-site residue. L-glutamine is bound by residues L384–Q387, E407, and R467. Residues H517 and E519 contribute to the active site.

The protein belongs to the CTP synthase family. In terms of assembly, homotetramer.

It carries out the reaction UTP + L-glutamine + ATP + H2O = CTP + L-glutamate + ADP + phosphate + 2 H(+). The catalysed reaction is L-glutamine + H2O = L-glutamate + NH4(+). It catalyses the reaction UTP + NH4(+) + ATP = CTP + ADP + phosphate + 2 H(+). The protein operates within pyrimidine metabolism; CTP biosynthesis via de novo pathway; CTP from UDP: step 2/2. With respect to regulation, allosterically activated by GTP, when glutamine is the substrate; GTP has no effect on the reaction when ammonia is the substrate. The allosteric effector GTP functions by stabilizing the protein conformation that binds the tetrahedral intermediate(s) formed during glutamine hydrolysis. Inhibited by the product CTP, via allosteric rather than competitive inhibition. Catalyzes the ATP-dependent amination of UTP to CTP with either L-glutamine or ammonia as the source of nitrogen. Regulates intracellular CTP levels through interactions with the four ribonucleotide triphosphates. This Deinococcus deserti (strain DSM 17065 / CIP 109153 / LMG 22923 / VCD115) protein is CTP synthase.